A 929-amino-acid chain; its full sequence is Isoleucine--tRNA ligase (929 aa).

A 'HIGH' region motif is present at residues 57–67 (PYANGNIHVGH). An L-isoleucyl-5'-AMP-binding site is contributed by E554. The short motif at 595 to 599 (KMSKS) is the 'KMSKS' region element. K598 serves as a coordination point for ATP. Zn(2+)-binding residues include C888, C891, C908, and C911.

Belongs to the class-I aminoacyl-tRNA synthetase family. IleS type 1 subfamily. As to quaternary structure, monomer. It depends on Zn(2+) as a cofactor.

The protein localises to the cytoplasm. The catalysed reaction is tRNA(Ile) + L-isoleucine + ATP = L-isoleucyl-tRNA(Ile) + AMP + diphosphate. Its function is as follows. Catalyzes the attachment of isoleucine to tRNA(Ile). As IleRS can inadvertently accommodate and process structurally similar amino acids such as valine, to avoid such errors it has two additional distinct tRNA(Ile)-dependent editing activities. One activity is designated as 'pretransfer' editing and involves the hydrolysis of activated Val-AMP. The other activity is designated 'posttransfer' editing and involves deacylation of mischarged Val-tRNA(Ile). This Streptococcus thermophilus (strain CNRZ 1066) protein is Isoleucine--tRNA ligase.